The primary structure comprises 1081 residues: MPRRNDLNKIMILGAGPIVIGQACEFDYSGTQACKALKEEGYEVVLVNSNPASIMTDPELADRTYIEPLIPEIVEKIIEKERPDAVLPTMGGQTALNLAVSLSKSGVLEKYGVELIGAKLPAIEMGEDRELFKEAMARIGVPVCPSGIASSIEEARQVAHEIGSYPLIIRPAFTLAGTGGGIAYNQEEYEEMVQYGLDQSPMSQILVEKSLLGWKEYELEVMRDLADNVVIICSIENFDPMGVHTGDSITVAPAQTLTDKEYQRLRDYSIAIIREIGVETGGSNIQFSVNPANGDVIVIEMNPRVSRSSALASKATGFPIAKFAAKLAVGYTLNEISNDITKKTPASFEPTIDYVVTKIPRFAFEKFPGAEPILNTQMKSVGEAMAIGRTFQESFQKALRSLETGRFGFGCDRHETLPTLSHLRSQLRTPNPERVFSLHHAFNLGMTVEEIHELTAIDPWFLDKLEDLVKTEKYMKQRSLKDLTAADLRYIKQQGFGDRQIAFATKTTEDEVRAYRKSLGITPVYKVVDTCAAEFEAFTPYYYSTYEPEECEVLPSDKPKVMILGGGPNRIGQGIEFDYCCCHAAFSLSDAGYETIMVNSNPETVSTDYDTSDRLYFEPLTKEDVLNIIEAENPVGIIIQFGGQTPLKLAVPLQKYLNSPDCPVQTKIWGTSPDSIDTAEDRERFEKILHELEISQPPNGIARDYEESRVVANRISYPVVVRPSYVLGGRAMEIVYSDEELERYMTYAVQIEPDHPILIDKFLENAIEVDVDSLTDSTGKVVIGSIMEHIEEAGIHSGDSACSIPYTSLSDNVLTTIRQWTEQLARALNVVGLMNIQYAVQGDQVYILEANPRASRTVPYVSKATGRPLAKIASLVMSGKTLEELGVTEEFIPQHVAVKEAVLPFSKFPGADTLLGPEMRSTGEVMGIDSDFGKAFAKAELGAGVILATTGTVFVSMSDRTKEAAVPVVRELIDLGFKVVATSGTQKVLREHGIEGVEVVLKLHEGRPHVIDWIKNGQIQFIINTPSGEESQLDGRTIRRAALDYKLPIITTIAGGKATVAALRSLQDHPLDVKALQDYLG.

Residues 1–403 (MPRRNDLNKI…SFQKALRSLE (403 aa)) form a carboxyphosphate synthetic domain region. ATP-binding residues include Arg-129, Arg-170, Gly-177, Lys-209, Leu-211, Glu-216, Gly-242, Val-243, His-244, Gln-286, and Glu-300. The region spanning 133–329 (KEAMARIGVP…IAKFAAKLAV (197 aa)) is the ATP-grasp 1 domain. Mg(2+) contacts are provided by Gln-286, Glu-300, and Asn-302. The Mn(2+) site is built by Gln-286, Glu-300, and Asn-302. The oligomerization domain stretch occupies residues 404 to 553 (TGRFGFGCDR…STYEPEECEV (150 aa)). Residues 554 to 944 (LPSDKPKVMI…AFAKAELGAG (391 aa)) are carbamoyl phosphate synthetic domain. Residues 686 to 878 (EKILHELEIS…LAKIASLVMS (193 aa)) enclose the ATP-grasp 2 domain. ATP is bound by residues Arg-722, Lys-761, Leu-763, Glu-768, Gly-794, Ile-795, His-796, Ser-797, Gln-837, and Glu-849. The Mg(2+) site is built by Gln-837, Glu-849, and Asn-851. Mn(2+) contacts are provided by Gln-837, Glu-849, and Asn-851. The MGS-like domain occupies 945 to 1081 (VILATTGTVF…DVKALQDYLG (137 aa)). An allosteric domain region spans residues 945–1081 (VILATTGTVF…DVKALQDYLG (137 aa)).

It belongs to the CarB family. In terms of assembly, composed of two chains; the small (or glutamine) chain promotes the hydrolysis of glutamine to ammonia, which is used by the large (or ammonia) chain to synthesize carbamoyl phosphate. Tetramer of heterodimers (alpha,beta)4. The cofactor is Mg(2+). Mn(2+) serves as cofactor.

It catalyses the reaction hydrogencarbonate + L-glutamine + 2 ATP + H2O = carbamoyl phosphate + L-glutamate + 2 ADP + phosphate + 2 H(+). The catalysed reaction is hydrogencarbonate + NH4(+) + 2 ATP = carbamoyl phosphate + 2 ADP + phosphate + 2 H(+). The protein operates within amino-acid biosynthesis; L-arginine biosynthesis; carbamoyl phosphate from bicarbonate: step 1/1. It functions in the pathway pyrimidine metabolism; UMP biosynthesis via de novo pathway; (S)-dihydroorotate from bicarbonate: step 1/3. Functionally, large subunit of the glutamine-dependent carbamoyl phosphate synthetase (CPSase). CPSase catalyzes the formation of carbamoyl phosphate from the ammonia moiety of glutamine, carbonate, and phosphate donated by ATP, constituting the first step of 2 biosynthetic pathways, one leading to arginine and/or urea and the other to pyrimidine nucleotides. The large subunit (synthetase) binds the substrates ammonia (free or transferred from glutamine from the small subunit), hydrogencarbonate and ATP and carries out an ATP-coupled ligase reaction, activating hydrogencarbonate by forming carboxy phosphate which reacts with ammonia to form carbamoyl phosphate. The protein is Carbamoyl phosphate synthase large chain of Synechocystis sp. (strain ATCC 27184 / PCC 6803 / Kazusa).